Reading from the N-terminus, the 1045-residue chain is MPIQEAEKSYKPHVIEEKVQSFWEERDIYERVKELREEGPRYSFLDGPPYCSGRIHLGTAWNKIMKDSYLRFKSMRGFNVRRQPGWDTHGLPIEHKVEGILGVRSKKDIEDKIGIEEFVRKCREFAMENKAVMTSQFQRLGVWMDWDDPYVTFDPAYMESCWWTLKRAHEKDLLLRDLRVITWCPRCETALALAEIDYHEKEDPSIYVKFPVSGDTYILVWTTTPWTLPANMAVAVHPDFDYAHTRLDGETYIMAEALVEKVLGEEAEIIKTVRGSELEGLTYRHPLDEEVPCHRDMEHRVILGDHVTLTEGTGCVHTAPGHGPEDFEIGKEYGLPVFCPVDEAGVFTEDAGKYRGLFVKDADSDIIDDLRSKNLLLRAETISHRYGFCWRCKTPIIYLATEQWFLKITEIKDKMLSELDRVQWIPSWAGESRFRNWIENARDWTISRQRYWGIPIPIWVCEDCDSIHVVGSIGELRELAVEGQLEGDFIHRPHVDRIILECGRCGGRMKRTPDVLDVWIDSGVAGWAALHYPREKELFSEWFPYDFITEGHDQTRGWFYSQLGCGVIALDETPYRRVLMHGFTLDEEGRKMSKSLGNVVEPEDVIEKYGADVLRFYLLWANKPWEDLKFVWDELKNVNKMFNILWNVYVFATTYMSLDRFQPGDHELEDLHFRDEDRWIISRVNSVALKVTEALDNLHFHRATREIHDFIVEDLSRWYIRLIRSRTWIERDDPDKLAAYHSLYTALKTLIVTLSPIAPHVCEDIYQNLVRGAEPDSPESIHMLDWMVSEDAVDGKLEAEMDIVREIIEACARARDTARYKLRWPVREIVVVSEDDKVLEAAESLKGVIAEQANAKSIRTSTEFPDMRIIAKPNPATLGPKLRQDMPPVMRKLEEADGAEVKAALESEGSFRVDLDGRIIVLEPDDIIFETELPENIVNAQFEGGSVFVDTELTPEIMSEAMARELVRRIQDMRKDLDLDVEARIEVSVKCSPEFRELTEPQREFVENEVRASHLSFDYTELEYTKEWKISDENLIISIKPSDKV.

Positions 49-59 (PYCSGRIHLGT) match the 'HIGH' region motif. The short motif at 591-595 (KMSKS) is the 'KMSKS' region element. Lys594 contributes to the ATP binding site.

Belongs to the class-I aminoacyl-tRNA synthetase family. IleS type 2 subfamily. As to quaternary structure, monomer. It depends on Zn(2+) as a cofactor.

Its subcellular location is the cytoplasm. It catalyses the reaction tRNA(Ile) + L-isoleucine + ATP = L-isoleucyl-tRNA(Ile) + AMP + diphosphate. Its function is as follows. Catalyzes the attachment of isoleucine to tRNA(Ile). As IleRS can inadvertently accommodate and process structurally similar amino acids such as valine, to avoid such errors it has two additional distinct tRNA(Ile)-dependent editing activities. One activity is designated as 'pretransfer' editing and involves the hydrolysis of activated Val-AMP. The other activity is designated 'posttransfer' editing and involves deacylation of mischarged Val-tRNA(Ile). The sequence is that of Isoleucine--tRNA ligase from Methanothermobacter marburgensis (strain ATCC BAA-927 / DSM 2133 / JCM 14651 / NBRC 100331 / OCM 82 / Marburg) (Methanobacterium thermoautotrophicum).